A 306-amino-acid chain; its full sequence is tRNA pseudouridine synthase B (306 aa).

Asp-48 functions as the Nucleophile in the catalytic mechanism.

Belongs to the pseudouridine synthase TruB family. Type 1 subfamily.

The catalysed reaction is uridine(55) in tRNA = pseudouridine(55) in tRNA. In terms of biological role, responsible for synthesis of pseudouridine from uracil-55 in the psi GC loop of transfer RNAs. The protein is tRNA pseudouridine synthase B of Haemophilus influenzae (strain 86-028NP).